Reading from the N-terminus, the 314-residue chain is Methionyl-tRNA formyltransferase (314 aa).

111–114 contacts (6S)-5,6,7,8-tetrahydrofolate; that stretch reads SLLP.

This sequence belongs to the Fmt family.

It catalyses the reaction L-methionyl-tRNA(fMet) + (6R)-10-formyltetrahydrofolate = N-formyl-L-methionyl-tRNA(fMet) + (6S)-5,6,7,8-tetrahydrofolate + H(+). Attaches a formyl group to the free amino group of methionyl-tRNA(fMet). The formyl group appears to play a dual role in the initiator identity of N-formylmethionyl-tRNA by promoting its recognition by IF2 and preventing the misappropriation of this tRNA by the elongation apparatus. In Coxiella burnetii (strain CbuK_Q154) (Coxiella burnetii (strain Q154)), this protein is Methionyl-tRNA formyltransferase.